The primary structure comprises 527 residues: Berberine bridge enzyme-like 5 (527 aa).

An N-terminal signal peptide occupies residues 1-19 (MKALFSVLCLVLLVSILRA). Cys32 and Cys95 are joined by a disulfide. Asn35 and Asn52 each carry an N-linked (GlcNAc...) asparagine glycan. Residues 73–247 (NYQKLVAIVA…LSWKINLVEV (175 aa)) form the FAD-binding PCMH-type domain. A cross-link (6-(S-cysteinyl)-8alpha-(pros-histidyl)-FAD (His-Cys)) is located at residues 110–172 (HDYEGLSYTS…QTLAFPAGVC (63 aa)). A glycan (N-linked (GlcNAc...) asparagine) is linked at Asn341.

The protein belongs to the oxygen-dependent FAD-linked oxidoreductase family. FAD serves as cofactor. Post-translationally, the FAD cofactor is bound via a bicovalent 6-S-cysteinyl, 8alpha-N1-histidyl FAD linkage.

It is found in the secreted. The protein resides in the cell wall. In terms of biological role, probable flavin-dependent oxidoreductase. This chain is Berberine bridge enzyme-like 5, found in Arabidopsis thaliana (Mouse-ear cress).